We begin with the raw amino-acid sequence, 267 residues long: Phosphate import ATP-binding protein PstB 2 (267 aa).

Positions 21–262 (LSTKDVHVYY…AKLQSTNDYV (242 aa)) constitute an ABC transporter domain. Residue 53–60 (GPSGSGKS) participates in ATP binding.

Belongs to the ABC transporter superfamily. Phosphate importer (TC 3.A.1.7) family. In terms of assembly, the complex is composed of two ATP-binding proteins (PstB), two transmembrane proteins (PstC and PstA) and a solute-binding protein (PstS).

It localises to the cell membrane. It carries out the reaction phosphate(out) + ATP + H2O = ADP + 2 phosphate(in) + H(+). In terms of biological role, part of the ABC transporter complex PstSACB involved in phosphate import. Responsible for energy coupling to the transport system. The protein is Phosphate import ATP-binding protein PstB 2 of Streptococcus pneumoniae serotype 4 (strain ATCC BAA-334 / TIGR4).